Here is a 456-residue protein sequence, read N- to C-terminus: Antigen Lp49 (456 aa).

An N-terminal signal peptide occupies residues 1-34 (MNSNPKKKFLKLIKIKSDIILLIPIFLFLVCCKS). Cys346 and Cys347 are oxidised to a cystine.

It is found in the cell outer membrane. May be involved in virulence. Binds human plasminogen (PLG) and stimulates its proteolytic cleavage to enzymatically active plasmin in the presence of an urokinase-type PLG activator in vitro. Activated plasmin has proteolytic activity which may help the bacteria to spread throughout the host by degrading extracellular matrix components, facilitating tissue penetration and invasion. The protein is Antigen Lp49 of Leptospira interrogans serogroup Icterohaemorrhagiae serovar copenhageni (strain Fiocruz L1-130).